Reading from the N-terminus, the 241-residue chain is Small ribosomal subunit protein uS2 (241 aa).

Belongs to the universal ribosomal protein uS2 family.

The sequence is that of Small ribosomal subunit protein uS2 from Sodalis glossinidius (strain morsitans).